Reading from the N-terminus, the 131-residue chain is Cystatin J (131 aa).

The N-terminal stretch at 1–18 (MHLYLCVLVCLSIGMANC) is a signal peptide. A Cystatin domain is found at 35 to 109 (DEILLTGVEF…RMNLPTKCSF (75 aa)). A Secondary area of contact motif is present at residues 68–72 (QVVAG). 2 cysteine pairs are disulfide-bonded: Cys-86–Cys-97 and Cys-107–Cys-128.

The protein belongs to the cystatin family.

The protein resides in the secreted. Its subcellular location is the nematocyst. Its function is as follows. This recombinant protein inhibits the C1 cysteine protease papain (Ki is below 0.5 nM). The sequence is that of Cystatin J from Cyanea capillata (Lion's mane jellyfish).